Consider the following 463-residue polypeptide: Thiamine-repressible acid phosphatase pho4 (463 aa).

Positions 1-18 (MKLSGISLWLLAASIVHA) are cleaved as a signal peptide. The active-site Nucleophile is the His-69. Residues Asn-98, Asn-104, Asn-186, Asn-221, Asn-251, and Asn-328 are each glycosylated (N-linked (GlcNAc...) asparagine). The active-site Proton donor is the Asp-341. N-linked (GlcNAc...) asparagine glycans are attached at residues Asn-433, Asn-439, and Asn-458.

This sequence belongs to the histidine acid phosphatase family.

The protein resides in the secreted. The protein localises to the cell wall. The catalysed reaction is a phosphate monoester + H2O = an alcohol + phosphate. May dephosphorylate thiamine phosphates. The chain is Thiamine-repressible acid phosphatase pho4 (pho4) from Schizosaccharomyces pombe (strain 972 / ATCC 24843) (Fission yeast).